We begin with the raw amino-acid sequence, 405 residues long: Phosphopentomutase (405 aa).

Mn(2+) is bound by residues Asp-10, Asp-303, His-308, Asp-344, His-345, and His-356.

It belongs to the phosphopentomutase family. The cofactor is Mn(2+).

The protein localises to the cytoplasm. It carries out the reaction 2-deoxy-alpha-D-ribose 1-phosphate = 2-deoxy-D-ribose 5-phosphate. The catalysed reaction is alpha-D-ribose 1-phosphate = D-ribose 5-phosphate. It functions in the pathway carbohydrate degradation; 2-deoxy-D-ribose 1-phosphate degradation; D-glyceraldehyde 3-phosphate and acetaldehyde from 2-deoxy-alpha-D-ribose 1-phosphate: step 1/2. Functionally, isomerase that catalyzes the conversion of deoxy-ribose 1-phosphate (dRib-1-P) and ribose 1-phosphate (Rib-1-P) to deoxy-ribose 5-phosphate (dRib-5-P) and ribose 5-phosphate (Rib-5-P), respectively. The polypeptide is Phosphopentomutase (Shewanella pealeana (strain ATCC 700345 / ANG-SQ1)).